The following is a 123-amino-acid chain: Small ribosomal subunit protein uS12cz/uS12cy (123 aa).

The protein belongs to the universal ribosomal protein uS12 family. As to quaternary structure, part of the 30S ribosomal subunit.

The protein resides in the plastid. It localises to the chloroplast. Its function is as follows. With S4 and S5 plays an important role in translational accuracy. Located at the interface of the 30S and 50S subunits. This is Small ribosomal subunit protein uS12cz/uS12cy (rps12-A) from Nandina domestica (Heavenly bamboo).